A 455-amino-acid polypeptide reads, in one-letter code: Kynurenine--oxoglutarate transaminase 3 (455 aa).

Residue Gly71 coordinates substrate. Lys116 bears the N6-acetyllysine; alternate mark. Lys116 bears the N6-succinyllysine; alternate mark. Asn218 lines the substrate pocket. An N6-(pyridoxal phosphate)lysine modification is found at Lys280. Arg430 contacts substrate.

This sequence belongs to the class-I pyridoxal-phosphate-dependent aminotransferase family. Homodimer. Requires pyridoxal 5'-phosphate as cofactor.

The enzyme catalyses L-kynurenine + 2-oxoglutarate = kynurenate + L-glutamate + H2O. It catalyses the reaction L-kynurenine + glyoxylate = kynurenate + glycine + H2O. It carries out the reaction 3-hydroxy-L-kynurenine + glyoxylate = xanthurenate + glycine + H2O. The catalysed reaction is an S-substituted L-cysteine + H2O = a thiol + pyruvate + NH4(+). The protein operates within amino-acid degradation; L-kynurenine degradation; kynurenate from L-kynurenine: step 1/2. Functionally, catalyzes the irreversible transamination of the L-tryptophan metabolite L-kynurenine to form kynurenic acid (KA), an intermediate in the tryptophan catabolic pathway which is also a broad spectrum antagonist of the three ionotropic excitatory amino acid receptors among others. May catalyze the beta-elimination of S-conjugates and Se-conjugates of L-(seleno)cysteine, resulting in the cleavage of the C-S or C-Se bond. Has transaminase activity towards L-kynurenine, tryptophan, phenylalanine, serine, cysteine, methionine, histidine, glutamine and asparagine with glyoxylate as an amino group acceptor (in vitro). Has lower activity with 2-oxoglutarate as amino group acceptor (in vitro). The polypeptide is Kynurenine--oxoglutarate transaminase 3 (Bos taurus (Bovine)).